We begin with the raw amino-acid sequence, 29 residues long: Small toxic protein TisB (29 aa).

Residues 6-28 traverse the membrane as a helical segment; that stretch reads IAILILKLIVAALQLLDAVLKYL.

Its subcellular location is the cell inner membrane. Toxic component of a type I toxin-antitoxin (TA) system. Overexpression causes cessation of growth, induces stress-response, a number of membrane protein genes, and leads to cell death. Inhibits ATP synthesis, ATP levels drop drastically quickly after induction. Part of the programmed response to DNA damage; damage leads to increased accumulation of the protein which slows or stops bacterial growth, probably allowing DNA repair before cells continue to grow. This chain is Small toxic protein TisB (tisB), found in Escherichia coli (strain K12).